Reading from the N-terminus, the 258-residue chain is Imidazole glycerol phosphate synthase subunit HisF (258 aa).

Residues D11 and D130 contribute to the active site.

This sequence belongs to the HisA/HisF family. In terms of assembly, heterodimer of HisH and HisF.

The protein localises to the cytoplasm. It catalyses the reaction 5-[(5-phospho-1-deoxy-D-ribulos-1-ylimino)methylamino]-1-(5-phospho-beta-D-ribosyl)imidazole-4-carboxamide + L-glutamine = D-erythro-1-(imidazol-4-yl)glycerol 3-phosphate + 5-amino-1-(5-phospho-beta-D-ribosyl)imidazole-4-carboxamide + L-glutamate + H(+). It functions in the pathway amino-acid biosynthesis; L-histidine biosynthesis; L-histidine from 5-phospho-alpha-D-ribose 1-diphosphate: step 5/9. Its function is as follows. IGPS catalyzes the conversion of PRFAR and glutamine to IGP, AICAR and glutamate. The HisF subunit catalyzes the cyclization activity that produces IGP and AICAR from PRFAR using the ammonia provided by the HisH subunit. This Xanthomonas oryzae pv. oryzae (strain MAFF 311018) protein is Imidazole glycerol phosphate synthase subunit HisF.